Here is a 220-residue protein sequence, read N- to C-terminus: Ribose-5-phosphate isomerase A (220 aa).

Substrate is bound by residues 28-31 (TGST), 81-84 (DGAD), and 94-97 (KGGG). Glu103 (proton acceptor) is an active-site residue. Position 121 (Lys121) interacts with substrate.

This sequence belongs to the ribose 5-phosphate isomerase family. In terms of assembly, homodimer.

The enzyme catalyses aldehydo-D-ribose 5-phosphate = D-ribulose 5-phosphate. It functions in the pathway carbohydrate degradation; pentose phosphate pathway; D-ribose 5-phosphate from D-ribulose 5-phosphate (non-oxidative stage): step 1/1. In terms of biological role, catalyzes the reversible conversion of ribose-5-phosphate to ribulose 5-phosphate. In Yersinia enterocolitica serotype O:8 / biotype 1B (strain NCTC 13174 / 8081), this protein is Ribose-5-phosphate isomerase A.